The primary structure comprises 356 residues: GTPase Obg (356 aa).

The Obg domain occupies 1 to 158 (MFIDSVKITL…RLVRLELKLI (158 aa)). Residues 159–339 (ADVGLVGFPN…LKFMLLEEIK (181 aa)) enclose the OBG-type G domain. GTP is bound by residues 165–172 (GFPNVGKS), 190–194 (FTTLT), 212–215 (DIPG), 280–283 (SKSD), and 320–322 (SSL). Residues Ser-172 and Thr-192 each coordinate Mg(2+).

It belongs to the TRAFAC class OBG-HflX-like GTPase superfamily. OBG GTPase family. Monomer. Requires Mg(2+) as cofactor.

Its subcellular location is the cytoplasm. In terms of biological role, an essential GTPase which binds GTP, GDP and possibly (p)ppGpp with moderate affinity, with high nucleotide exchange rates and a fairly low GTP hydrolysis rate. Plays a role in control of the cell cycle, stress response, ribosome biogenesis and in those bacteria that undergo differentiation, in morphogenesis control. This Campylobacter jejuni subsp. jejuni serotype O:23/36 (strain 81-176) protein is GTPase Obg.